We begin with the raw amino-acid sequence, 176 residues long: Transcription termination/antitermination protein NusG (176 aa).

Residues 125 to 149 (GEVVRVVEGPFANFTATVEEYDVEH) form the KOW domain.

It belongs to the NusG family.

Participates in transcription elongation, termination and antitermination. This chain is Transcription termination/antitermination protein NusG, found in Helicobacter pylori (strain J99 / ATCC 700824) (Campylobacter pylori J99).